Consider the following 428-residue polypeptide: F-box/LRR-repeat protein 3 (428 aa).

Over residues 1–21 (MKRGGRDSDRNSSEEGTAEKS) the composition is skewed to basic and acidic residues. Positions 1–27 (MKRGGRDSDRNSSEEGTAEKSKKLRTT) are disordered. An F-box domain is found at 34-81 (CDWGNLLQDIILQVFKYLPLLDRAHASQVCRNWNQVFHMPDLWRCFEF). LRR repeat units lie at residues 119–146 (SSKE…GLIS), 181–207 (DTPV…KMSS), 208–233 (CPHV…ALNY), 234–259 (HLLS…RIDV), 316–341 (GRSV…VVCA), 343–368 (GLRP…GLGE), and 369–394 (CEVS…SIME).

In terms of assembly, part of the SCF (SKP1-CUL1-F-box) E3 ubiquitin-protein ligase complex SCF(FBXL3) composed of CUL1, SKP1, RBX1 and FBXL3. Interacts with CRY1 and CRY2 (phosphorylated). Interacts with HDAC3. Interacts with KDM8. Undergoes autophagy-mediated degradation in the liver in a time-dependent manner. As to expression, widely expressed.

Its subcellular location is the nucleus. The protein localises to the cytoplasm. It functions in the pathway protein modification; protein ubiquitination. Substrate-recognition component of the SCF(FBXL3) E3 ubiquitin ligase complex involved in circadian rhythm function. Plays a key role in the maintenance of both the speed and the robustness of the circadian clock oscillation. The SCF(FBXL3) complex mainly acts in the nucleus and mediates ubiquitination and subsequent degradation of CRY1 and CRY2. Activity of the SCF(FBXL3) complex is counteracted by the SCF(FBXL21) complex. The chain is F-box/LRR-repeat protein 3 (FBXL3) from Homo sapiens (Human).